A 147-amino-acid chain; its full sequence is Small ribosomal subunit protein uS12 (147 aa).

This sequence belongs to the universal ribosomal protein uS12 family. Part of the 30S ribosomal subunit.

Its function is as follows. With S4 and S5 plays an important role in translational accuracy. Located at the interface of the 30S and 50S subunits. The protein is Small ribosomal subunit protein uS12 of Methanococcus maripaludis (strain DSM 14266 / JCM 13030 / NBRC 101832 / S2 / LL).